The following is a 249-amino-acid chain: tRNA (guanine-N(1)-)-methyltransferase (249 aa).

S-adenosyl-L-methionine contacts are provided by residues Gly-121 and 141-146 (LGDFVL).

The protein belongs to the RNA methyltransferase TrmD family. As to quaternary structure, homodimer.

Its subcellular location is the cytoplasm. The catalysed reaction is guanosine(37) in tRNA + S-adenosyl-L-methionine = N(1)-methylguanosine(37) in tRNA + S-adenosyl-L-homocysteine + H(+). Functionally, specifically methylates guanosine-37 in various tRNAs. The sequence is that of tRNA (guanine-N(1)-)-methyltransferase from Cereibacter sphaeroides (strain KD131 / KCTC 12085) (Rhodobacter sphaeroides).